The primary structure comprises 276 residues: Small ribosomal subunit protein uS2 (276 aa).

Belongs to the universal ribosomal protein uS2 family.

The chain is Small ribosomal subunit protein uS2 from Chlamydia caviae (strain ATCC VR-813 / DSM 19441 / 03DC25 / GPIC) (Chlamydophila caviae).